A 109-amino-acid polypeptide reads, in one-letter code: Nucleoid-associated protein LJ_0424 (109 aa).

It belongs to the YbaB/EbfC family. As to quaternary structure, homodimer.

The protein resides in the cytoplasm. It localises to the nucleoid. Its function is as follows. Binds to DNA and alters its conformation. May be involved in regulation of gene expression, nucleoid organization and DNA protection. This chain is Nucleoid-associated protein LJ_0424, found in Lactobacillus johnsonii (strain CNCM I-12250 / La1 / NCC 533).